The primary structure comprises 717 residues: Cleavage stimulation factor subunit 3 (717 aa).

The residue at position 2 (Ser-2) is an N-acetylserine. HAT repeat units follow at residues Gln-45–Lys-77, Lys-79–Glu-110, Ser-117–Gly-152, Gln-163–Gly-196, Lys-221–Ser-261, Leu-271–Gln-303, Leu-319–Ser-352, Met-354–Arg-387, and Asn-458–Asn-494. Residues Val-684–His-705 form a disordered region. Ser-691 carries the post-translational modification Phosphoserine.

As to quaternary structure, homodimer. The CSTF complex is composed of CSTF1 (50 kDa subunit), CSTF2 (64 kDa subunit) and CSTF3 (77 kDa subunit). CSTF3 directly interacts with CSTF1 and CSTF2. Interacts with FIP1L1.

The protein resides in the nucleus. One of the multiple factors required for polyadenylation and 3'-end cleavage of mammalian pre-mRNAs. This chain is Cleavage stimulation factor subunit 3 (CSTF3), found in Homo sapiens (Human).